The chain runs to 123 residues: Sirohydrochlorin cobaltochelatase (123 aa).

The active-site Proton acceptor is the His9. His9 contacts Co(2+). Substrate contacts are provided by residues Glu43 and 68 to 73; that span reads FAAGMH. His73 is a binding site for Co(2+).

It belongs to the CbiX family. CbiXS subfamily. In terms of assembly, homotetramer; dimer of dimers.

It carries out the reaction Co-sirohydrochlorin + 2 H(+) = sirohydrochlorin + Co(2+). It functions in the pathway cofactor biosynthesis; adenosylcobalamin biosynthesis; cob(II)yrinate a,c-diamide from sirohydrochlorin (anaerobic route): step 1/10. Catalyzes the insertion of Co(2+) into sirohydrochlorin as part of the anaerobic pathway to cobalamin biosynthesis. In Sulfolobus acidocaldarius (strain ATCC 33909 / DSM 639 / JCM 8929 / NBRC 15157 / NCIMB 11770), this protein is Sirohydrochlorin cobaltochelatase.